The primary structure comprises 163 residues: Nucleotide-binding protein CKO_02735 (163 aa).

It belongs to the YajQ family.

Functionally, nucleotide-binding protein. The sequence is that of Nucleotide-binding protein CKO_02735 from Citrobacter koseri (strain ATCC BAA-895 / CDC 4225-83 / SGSC4696).